The following is an 873-amino-acid chain: Alanine--tRNA ligase (873 aa).

Residues His-557, His-561, Cys-659, and His-663 each coordinate Zn(2+).

This sequence belongs to the class-II aminoacyl-tRNA synthetase family. Zn(2+) serves as cofactor.

The protein localises to the cytoplasm. It catalyses the reaction tRNA(Ala) + L-alanine + ATP = L-alanyl-tRNA(Ala) + AMP + diphosphate. In terms of biological role, catalyzes the attachment of alanine to tRNA(Ala) in a two-step reaction: alanine is first activated by ATP to form Ala-AMP and then transferred to the acceptor end of tRNA(Ala). Also edits incorrectly charged Ser-tRNA(Ala) and Gly-tRNA(Ala) via its editing domain. The polypeptide is Alanine--tRNA ligase (Nitrosococcus oceani (strain ATCC 19707 / BCRC 17464 / JCM 30415 / NCIMB 11848 / C-107)).